The primary structure comprises 725 residues: Putative coiled-coil domain-containing protein 144B (725 aa).

Residues 1-11 are compositionally biased toward basic and acidic residues; that stretch reads MASWGGEKRGG. Disordered stretches follow at residues 1 to 25, 87 to 188, 213 to 260, 453 to 485, and 528 to 586; these read MASW…ATRK, AARS…NLTE, LPEN…DCDR, NMNQ…DSDR, and EEEM…KVKN. 2 stretches are compositionally biased toward polar residues: residues 129–150 and 165–178; these read PESL…LSDE and PSVS…QSAT. Residues 215-244 adopt a coiled-coil conformation; that stretch reads ENKESKEAEQDLELTSEEEQERLKGCENKQ. Positions 224–234 are enriched in acidic residues; it reads QDLELTSEEEQ. Residues 453–467 show a composition bias toward polar residues; that stretch reads NMNQNSDSGSTNNYK. A coiled-coil region spans residues 490-546; that stretch reads YLHEELQQDMQKFKNEVNTLEEEFLALKKENVQLHKEVEEEMEKHRSNSTELSGTLT. A compositionally biased stretch (basic and acidic residues) spans 528-537; the sequence is EEEMEKHRSN. Residues 543 to 552 are compositionally biased toward low complexity; sequence GTLTDGTTVG. The segment covering 563 to 583 has biased composition (basic and acidic residues); sequence PRKENEEHDRPADKTANEKNK. Positions 648–713 form a coiled coil; sequence LLKLKNNHCD…ALKQENGRKE (66 aa).

Belongs to the CCDC144 family.

This chain is Putative coiled-coil domain-containing protein 144B, found in Homo sapiens (Human).